We begin with the raw amino-acid sequence, 248 residues long: 4-hydroxy-tetrahydrodipicolinate reductase (248 aa).

NAD(+)-binding positions include 74–76 and 99–102; these read GTT and SANF. Residue histidine 134 is the Proton donor/acceptor of the active site. Histidine 135 serves as a coordination point for (S)-2,3,4,5-tetrahydrodipicolinate. The active-site Proton donor is the lysine 138. 144-145 contacts (S)-2,3,4,5-tetrahydrodipicolinate; sequence GT.

The protein belongs to the DapB family.

The protein resides in the cytoplasm. It catalyses the reaction (S)-2,3,4,5-tetrahydrodipicolinate + NAD(+) + H2O = (2S,4S)-4-hydroxy-2,3,4,5-tetrahydrodipicolinate + NADH + H(+). The catalysed reaction is (S)-2,3,4,5-tetrahydrodipicolinate + NADP(+) + H2O = (2S,4S)-4-hydroxy-2,3,4,5-tetrahydrodipicolinate + NADPH + H(+). The protein operates within amino-acid biosynthesis; L-lysine biosynthesis via DAP pathway; (S)-tetrahydrodipicolinate from L-aspartate: step 4/4. In terms of biological role, catalyzes the conversion of 4-hydroxy-tetrahydrodipicolinate (HTPA) to tetrahydrodipicolinate. This chain is 4-hydroxy-tetrahydrodipicolinate reductase, found in Chlorobium phaeobacteroides (strain BS1).